We begin with the raw amino-acid sequence, 396 residues long: 1-deoxy-D-xylulose 5-phosphate reductoisomerase (396 aa).

NADPH is bound by residues Thr-14, Gly-15, Ser-16, Ile-17, Gly-40, and Asn-128. Residue Lys-129 coordinates 1-deoxy-D-xylulose 5-phosphate. NADPH is bound at residue Glu-130. Asp-154 contributes to the Mn(2+) binding site. 1-deoxy-D-xylulose 5-phosphate-binding residues include Ser-155, Glu-156, Ser-180, and His-203. Glu-156 is a Mn(2+) binding site. NADPH is bound at residue Gly-209. The 1-deoxy-D-xylulose 5-phosphate site is built by Ser-216, Asn-221, Lys-222, and Glu-225. Glu-225 contacts Mn(2+).

Belongs to the DXR family. Mg(2+) serves as cofactor. Mn(2+) is required as a cofactor.

It catalyses the reaction 2-C-methyl-D-erythritol 4-phosphate + NADP(+) = 1-deoxy-D-xylulose 5-phosphate + NADPH + H(+). The protein operates within isoprenoid biosynthesis; isopentenyl diphosphate biosynthesis via DXP pathway; isopentenyl diphosphate from 1-deoxy-D-xylulose 5-phosphate: step 1/6. Catalyzes the NADPH-dependent rearrangement and reduction of 1-deoxy-D-xylulose-5-phosphate (DXP) to 2-C-methyl-D-erythritol 4-phosphate (MEP). The polypeptide is 1-deoxy-D-xylulose 5-phosphate reductoisomerase (Xylella fastidiosa (strain 9a5c)).